The following is a 564-amino-acid chain: Plant UBX domain-containing protein 8 (564 aa).

N-acetylalanine is present on A2. Positions 2–44 constitute a UBA-like domain; it reads ATPNQEAIDTFISITGASDAVALQKLEEHRGDLNQAVNAYFSE. UIM domains are found at residues 198 to 217 and 230 to 249; these read IEEE…AEGS and EDDD…AEEE. A disordered region spans residues 210–229; the sequence is SKKEAEGSSNPLLEERPLHM. Disordered stretches follow at residues 267–358, 371–423, and 443–483; these read AVTA…EEHD, IPET…DKEM, and FLEE…QADE. Positions 291-300 are enriched in acidic residues; sequence FDDDSDDVDE. 4 positions are modified to phosphoserine: S295, S324, S326, and S328. Over residues 322-334 the composition is skewed to basic and acidic residues; the sequence is DRSRSGSPEEEHA. Residues 381–395 are compositionally biased toward pro residues; it reads FLPPQPRAQPRPPSP. Positions 412-478 form a coiled coil; that stretch reads VASLQADRDK…DAKEASLPKE (67 aa). Positions 443-475 are enriched in basic and acidic residues; that stretch reads FLEEEKKKEEEAQRKLEEEQELERQLDAKEASL. The UBX domain occupies 482–560; the sequence is DEENAITLLI…GLTSKQEALF (79 aa).

In terms of assembly, interacts with RABA5C/ARA-4.

This is Plant UBX domain-containing protein 8 from Arabidopsis thaliana (Mouse-ear cress).